The primary structure comprises 560 residues: Nibrin homolog (560 aa).

The FHA domain occupies 25-87 (YKVGRKDCDV…YGTFFNKVQG (63 aa)). Residues 115–190 (TFRLSFVPIV…KQIVLGDWFK (76 aa)) form the BRCT domain.

Belongs to the Nibrin family. As to quaternary structure, component of the MRN complex composed of two heterodimers RAD50 and MRE11 associated with a single NBS1. Mostly expressed in the shoot apex and young flower, but also in young leaves, root tips and stamen, tissues where frequent cell division or meiosis may occur.

Its subcellular location is the nucleus. It localises to the chromosome. Component of the MRN complex, which plays a central role in double-strand break (DSB) repair, DNA recombination, maintenance of telomere integrity and meiosis. The MRN complex is involved in the repair of DNA double-strand breaks (DSBs) via homologous recombination (HR), an error-free mechanism which primarily occurs during S and G2 phases. The complex (1) mediates the end resection of damaged DNA, which generates proper single-stranded DNA, a key initial steps in HR, and is (2) required for the recruitment of other repair factors and efficient activation of ATM and ATR upon DNA damage. The MRN complex possesses single-strand endonuclease activity and double-strand-specific 3'-5' exonuclease activity, which are provided by MRE11, to initiate end resection, which is required for single-strand invasion and recombination. Within the MRN complex, NBS1 acts as a protein-protein adapter, which specifically recognizes and binds phosphorylated proteins, promoting their recruitment to DNA damage sites. Recruits MRE11 and RAD50 components of the MRN complex to DSBs in response to DNA damage. The protein is Nibrin homolog of Oryza sativa subsp. japonica (Rice).